We begin with the raw amino-acid sequence, 166 residues long: UPF0561 protein C2orf68 (166 aa).

The disordered stretch occupies residues 32–107 (NQIARDDYDK…SELEPSGHQL (76 aa)). Basic and acidic residues-rich tracts occupy residues 34–49 (IARD…AAKE) and 73–85 (RHRD…RNPD). Positions 91–104 (ESSSSGGSELEPSG) are enriched in low complexity.

Belongs to the UPF0561 family.

This chain is UPF0561 protein C2orf68 (C2orf68), found in Homo sapiens (Human).